Here is a 488-residue protein sequence, read N- to C-terminus: ATP synthase subunit beta (488 aa).

Glycine 155 to threonine 162 provides a ligand contact to ATP. The disordered stretch occupies residues glycine 467–asparagine 488.

It belongs to the ATPase alpha/beta chains family. In terms of assembly, F-type ATPases have 2 components, CF(1) - the catalytic core - and CF(0) - the membrane proton channel. CF(1) has five subunits: alpha(3), beta(3), gamma(1), delta(1), epsilon(1). CF(0) has three main subunits: a(1), b(2) and c(9-12). The alpha and beta chains form an alternating ring which encloses part of the gamma chain. CF(1) is attached to CF(0) by a central stalk formed by the gamma and epsilon chains, while a peripheral stalk is formed by the delta and b chains.

Its subcellular location is the cell membrane. It catalyses the reaction ATP + H2O + 4 H(+)(in) = ADP + phosphate + 5 H(+)(out). Its function is as follows. Produces ATP from ADP in the presence of a proton gradient across the membrane. The catalytic sites are hosted primarily by the beta subunits. In Lacticaseibacillus casei (strain BL23) (Lactobacillus casei), this protein is ATP synthase subunit beta.